A 351-amino-acid polypeptide reads, in one-letter code: Photosystem II D2 protein (351 aa).

Residues T39 to T59 traverse the membrane as a helical segment. H116 contributes to the chlorophyll a binding site. Residues G123–P139 form a helical membrane-spanning segment. Pheophytin a is bound by residues Q128 and N141. A helical transmembrane segment spans residues V151 to S164. Residue H196 participates in chlorophyll a binding. Residues G206–E226 form a helical membrane-spanning segment. Residues H213 and F260 each contribute to the a plastoquinone site. Position 213 (H213) interacts with Fe cation. H267 serves as a coordination point for Fe cation. A helical transmembrane segment spans residues G277–R293.

Belongs to the reaction center PufL/M/PsbA/D family. PSII is composed of 1 copy each of membrane proteins PsbA, PsbB, PsbC, PsbD, PsbE, PsbF, PsbH, PsbI, PsbJ, PsbK, PsbL, PsbM, PsbT, PsbX, PsbY, PsbZ, Psb30/Ycf12, peripheral proteins PsbO, CyanoQ (PsbQ), PsbU, PsbV and a large number of cofactors. It forms dimeric complexes. The cofactor is The D1/D2 heterodimer binds P680, chlorophylls that are the primary electron donor of PSII, and subsequent electron acceptors. It shares a non-heme iron and each subunit binds pheophytin, quinone, additional chlorophylls, carotenoids and lipids. There is also a Cl(-1) ion associated with D1 and D2, which is required for oxygen evolution. The PSII complex binds additional chlorophylls, carotenoids and specific lipids..

It is found in the host cellular thylakoid membrane. It catalyses the reaction 2 a plastoquinone + 4 hnu + 2 H2O = 2 a plastoquinol + O2. Its function is as follows. Photosystem II (PSII) is a light-driven water:plastoquinone oxidoreductase that uses light energy to abstract electrons from H(2)O, generating O(2) and a proton gradient subsequently used for ATP formation. It consists of a core antenna complex that captures photons, and an electron transfer chain that converts photonic excitation into a charge separation. The D1/D2 (PsbA/PsbD) reaction center heterodimer binds P680, the primary electron donor of PSII as well as several subsequent electron acceptors. D2 is needed for assembly of a stable PSII complex. This chain is Photosystem II D2 protein (psbD), found in Synechococcus phage S-RSM2.